The sequence spans 190 residues: dCTP deaminase, dUMP-forming (190 aa).

Residues 101 to 106 (KSSLGR), Asp-119, 127 to 129 (TLE), Gln-148, Tyr-162, Lys-170, and Gln-174 each bind dCTP. Glu-129 (proton donor/acceptor) is an active-site residue. The interval 160 to 190 (HPYGSSRAGSKYQGQRGPTPSRSCQNFIRST) is disordered. Over residues 171-190 (YQGQRGPTPSRSCQNFIRST) the composition is skewed to polar residues.

It belongs to the dCTP deaminase family. Homotrimer.

The catalysed reaction is dCTP + 2 H2O = dUMP + NH4(+) + diphosphate. It functions in the pathway pyrimidine metabolism; dUMP biosynthesis; dUMP from dCTP: step 1/1. In terms of biological role, bifunctional enzyme that catalyzes both the deamination of dCTP to dUTP and the hydrolysis of dUTP to dUMP without releasing the toxic dUTP intermediate. This chain is dCTP deaminase, dUMP-forming, found in Mycobacterium bovis (strain ATCC BAA-935 / AF2122/97).